We begin with the raw amino-acid sequence, 343 residues long: Heat-inducible transcription repressor HrcA (343 aa).

This sequence belongs to the HrcA family.

Negative regulator of class I heat shock genes (grpE-dnaK-dnaJ and groELS operons). Prevents heat-shock induction of these operons. This chain is Heat-inducible transcription repressor HrcA, found in Bacillus pumilus (strain SAFR-032).